Here is a 429-residue protein sequence, read N- to C-terminus: Palmitoyltransferase ZDHHC23 (429 aa).

At 1-81 the chain is on the cytoplasmic side; sequence MKPVKKKKTE…RIPWLRGAKK (81 aa). A helical membrane pass occupies residues 82–102; it reads VNISILPPLVLLPVLLRVASW. A topological domain (lumenal) is located at residue histidine 103. Residues 104–124 traverse the membrane as a helical segment; sequence FLLGVVVLTSLPMLALWYYYL. Topologically, residues 125–130 are cytoplasmic; that stretch reads THRRKE. A helical membrane pass occupies residues 131–151; the sequence is QTLFFLSLGLFSLGYMYYVFL. Over 152-159 the chain is Lumenal; the sequence is QEVVPQGH. The helical transmembrane segment at 160-180 threads the bilayer; sequence VGPAQLALLTCGLFLILVALY. Residues 181–296 are Cytoplasmic-facing; sequence RAKKNPGYLS…NSCVGESNHQ (116 aa). Residues 212-247 form a disordered region; that stretch reads QEKTKGFPGTDTSGSLNNRTLKDDAKGSSRVGLDSP. Positions 221–230 are enriched in polar residues; sequence TDTSGSLNNR. Residues 253–303 form the DHHC domain; sequence DWCAKCQLVRPARAWHCRICGICVRRMDHHCVWINSCVGESNHQAFILALS. Residue cysteine 283 is the S-palmitoyl cysteine intermediate of the active site. The chain crosses the membrane as a helical span at residues 297 to 317; it reads AFILALSIFLLTSVYGISLTL. Topologically, residues 318 to 347 are lumenal; that stretch reads NTICRDRSLFTALFYCPGVYANYSSALSFT. Residues 348–368 form a helical membrane-spanning segment; it reads CVWYSVIITAGMAYIFLIQLI. Residues 369-429 are Cytoplasmic-facing; that stretch reads NISYNVTERE…TVHTPAEDIV (61 aa). Residues 426–429 form an interaction with NOS1 region; sequence EDIV.

The protein belongs to the DHHC palmitoyltransferase family. In terms of assembly, interacts with NOS1. In terms of tissue distribution, expressed in the brain (at protein level), with highest levels in olfactory bulb, piriform cortex and hippocampus.

It is found in the golgi apparatus membrane. The protein localises to the golgi apparatus. The protein resides in the trans-Golgi network membrane. It carries out the reaction L-cysteinyl-[protein] + hexadecanoyl-CoA = S-hexadecanoyl-L-cysteinyl-[protein] + CoA. Functionally, palmitoyltransferase that could catalyze the addition of palmitate onto various protein substrates and be involved in a variety of cellular processes. Palmitoyltransferase that mediates palmitoylation of KCNMA1, regulating localization of KCNMA1 to the plasma membrane. May be involved in NOS1 regulation and targeting to the synaptic membrane. The protein is Palmitoyltransferase ZDHHC23 of Rattus norvegicus (Rat).